The primary structure comprises 257 residues: Type 2 phosphatidylinositol 4,5-bisphosphate 4-phosphatase (257 aa).

The span at 1–10 (MAADGVDERS) shows a compositional bias: basic and acidic residues. Positions 1–34 (MAADGVDERSPLLSASHSGSVTPTAPPYLQDSSP) are disordered. Positions 13-23 (LSASHSGSVTP) are enriched in polar residues. Threonine 22 carries the post-translational modification Phosphothreonine. Serine 33 carries the phosphoserine modification. Cysteine 107 is a catalytic residue. Positions 107 to 113 (CKDTSRR) match the CX5R motif motif. The next 2 membrane-spanning stretches (helical) occupy residues 192–212 (CCAY…LTVG) and 227–247 (WAIA…WGAI).

It localises to the late endosome membrane. Its subcellular location is the lysosome membrane. The protein localises to the cytoplasmic vesicle. It is found in the phagosome membrane. The protein resides in the cell membrane. It carries out the reaction a 1,2-diacyl-sn-glycero-3-phospho-(1D-myo-inositol-4,5-bisphosphate) + H2O = a 1,2-diacyl-sn-glycero-3-phospho-(1D-myo-inositol-5-phosphate) + phosphate. Functionally, catalyzes the hydrolysis of phosphatidylinositol-4,5-bisphosphate (PtdIns-4,5-P2) to phosphatidylinositol-4-phosphate (PtdIns-4-P). Does not hydrolyze phosphatidylinositol 3,4,5-trisphosphate, phosphatidylinositol 3,4-bisphosphate, inositol 3,5-bisphosphate, inositol 3,4-bisphosphate, phosphatidylinositol 5-monophosphate, phosphatidylinositol 4-monophosphate and phosphatidylinositol 3-monophosphate. Negatively regulates the phagocytosis of large particles by reducing phagosomal phosphatidylinositol 4,5-bisphosphate accumulation during cup formation. The chain is Type 2 phosphatidylinositol 4,5-bisphosphate 4-phosphatase from Bos taurus (Bovine).